The sequence spans 488 residues: Bifunctional protein HldE (488 aa).

The tract at residues 1–331 (MTELSALVER…VALHREDLTL (331 aa)) is ribokinase. Position 206 to 209 (206 to 209 (NRKE)) interacts with ATP. The active site involves Asp276. Positions 358 to 488 (FTNGCFDLLH…TNTIKKMNGN (131 aa)) are cytidylyltransferase.

It in the N-terminal section; belongs to the carbohydrate kinase PfkB family. This sequence in the C-terminal section; belongs to the cytidylyltransferase family. As to quaternary structure, homodimer.

It carries out the reaction D-glycero-beta-D-manno-heptose 7-phosphate + ATP = D-glycero-beta-D-manno-heptose 1,7-bisphosphate + ADP + H(+). It catalyses the reaction D-glycero-beta-D-manno-heptose 1-phosphate + ATP + H(+) = ADP-D-glycero-beta-D-manno-heptose + diphosphate. The protein operates within nucleotide-sugar biosynthesis; ADP-L-glycero-beta-D-manno-heptose biosynthesis; ADP-L-glycero-beta-D-manno-heptose from D-glycero-beta-D-manno-heptose 7-phosphate: step 1/4. Its pathway is nucleotide-sugar biosynthesis; ADP-L-glycero-beta-D-manno-heptose biosynthesis; ADP-L-glycero-beta-D-manno-heptose from D-glycero-beta-D-manno-heptose 7-phosphate: step 3/4. In terms of biological role, catalyzes the phosphorylation of D-glycero-D-manno-heptose 7-phosphate at the C-1 position to selectively form D-glycero-beta-D-manno-heptose-1,7-bisphosphate. Functionally, catalyzes the ADP transfer from ATP to D-glycero-beta-D-manno-heptose 1-phosphate, yielding ADP-D-glycero-beta-D-manno-heptose. This is Bifunctional protein HldE from Paramagnetospirillum magneticum (strain ATCC 700264 / AMB-1) (Magnetospirillum magneticum).